Consider the following 124-residue polypeptide: MTPTIFLVILCLGVASAVIVPEAQLDAELQEQKDKEVLIKAVWSKFMKTNKLHSSENDQETEGSNIEMSASGQLTDEELMKIMTTVLHPMFEEEENKPQPVVDDPEFEDYTESGDGFFVPNQPQ.

Positions 1 to 18 are cleaved as a signal peptide; the sequence is MTPTIFLVILCLGVASAV. 2 disordered regions span residues 51-74 and 91-124; these read KLHS…SGQL and FEEE…NQPQ. Over residues 62-74 the composition is skewed to polar residues; the sequence is EGSNIEMSASGQL. Residues 103–112 show a composition bias toward acidic residues; the sequence is DDPEFEDYTE.

The protein localises to the secreted. It is found in the extracellular space. Functionally, it may be a growth factor/hormone, perhaps involved in interaction between the maternal and fetal systems in maintenance of pregnancy. The sequence is that of Trophoblast-specific protein alpha (Tpbpa) from Mus musculus (Mouse).